The primary structure comprises 326 residues: Tetraacyldisaccharide 4'-kinase (326 aa).

55–62 (TAGGNGKT) provides a ligand contact to ATP.

This sequence belongs to the LpxK family.

The catalysed reaction is a lipid A disaccharide + ATP = a lipid IVA + ADP + H(+). It participates in glycolipid biosynthesis; lipid IV(A) biosynthesis; lipid IV(A) from (3R)-3-hydroxytetradecanoyl-[acyl-carrier-protein] and UDP-N-acetyl-alpha-D-glucosamine: step 6/6. In terms of biological role, transfers the gamma-phosphate of ATP to the 4'-position of a tetraacyldisaccharide 1-phosphate intermediate (termed DS-1-P) to form tetraacyldisaccharide 1,4'-bis-phosphate (lipid IVA). This chain is Tetraacyldisaccharide 4'-kinase, found in Erwinia tasmaniensis (strain DSM 17950 / CFBP 7177 / CIP 109463 / NCPPB 4357 / Et1/99).